The chain runs to 512 residues: Bifunctional purine biosynthesis protein PurH (512 aa).

An MGS-like domain is found at 1-146; sequence MTIKRALISV…KNHQDVTVIV (146 aa).

It belongs to the PurH family.

The enzyme catalyses (6R)-10-formyltetrahydrofolate + 5-amino-1-(5-phospho-beta-D-ribosyl)imidazole-4-carboxamide = 5-formamido-1-(5-phospho-D-ribosyl)imidazole-4-carboxamide + (6S)-5,6,7,8-tetrahydrofolate. It carries out the reaction IMP + H2O = 5-formamido-1-(5-phospho-D-ribosyl)imidazole-4-carboxamide. Its pathway is purine metabolism; IMP biosynthesis via de novo pathway; 5-formamido-1-(5-phospho-D-ribosyl)imidazole-4-carboxamide from 5-amino-1-(5-phospho-D-ribosyl)imidazole-4-carboxamide (10-formyl THF route): step 1/1. It functions in the pathway purine metabolism; IMP biosynthesis via de novo pathway; IMP from 5-formamido-1-(5-phospho-D-ribosyl)imidazole-4-carboxamide: step 1/1. The polypeptide is Bifunctional purine biosynthesis protein PurH (Bacillus subtilis (strain 168)).